A 71-amino-acid chain; its full sequence is Small ribosomal subunit protein eS17 (71 aa).

It belongs to the eukaryotic ribosomal protein eS17 family.

The polypeptide is Small ribosomal subunit protein eS17 (Pyrobaculum neutrophilum (strain DSM 2338 / JCM 9278 / NBRC 100436 / V24Sta) (Thermoproteus neutrophilus)).